The sequence spans 199 residues: Fe/S biogenesis protein NfuA (199 aa).

[4Fe-4S] cluster-binding residues include C151 and C154.

The protein belongs to the NfuA family. As to quaternary structure, homodimer. [4Fe-4S] cluster is required as a cofactor.

Involved in iron-sulfur cluster biogenesis. Binds a 4Fe-4S cluster, can transfer this cluster to apoproteins, and thereby intervenes in the maturation of Fe/S proteins. Could also act as a scaffold/chaperone for damaged Fe/S proteins. The sequence is that of Fe/S biogenesis protein NfuA from Xylella fastidiosa (strain M12).